Reading from the N-terminus, the 327-residue chain is Elongation factor P--(R)-beta-lysine ligase (327 aa).

78–80 contacts substrate; the sequence is SPE. ATP-binding positions include 102-104 and Asn111; that span reads RNQ. Tyr120 serves as a coordination point for substrate. ATP is bound at residue 246–247; the sequence is EL. Glu253 contributes to the substrate binding site. ATP is bound at residue Gly302.

It belongs to the class-II aminoacyl-tRNA synthetase family. EpmA subfamily. As to quaternary structure, homodimer.

It carries out the reaction D-beta-lysine + L-lysyl-[protein] + ATP = N(6)-((3R)-3,6-diaminohexanoyl)-L-lysyl-[protein] + AMP + diphosphate + H(+). Functionally, with EpmB is involved in the beta-lysylation step of the post-translational modification of translation elongation factor P (EF-P). Catalyzes the ATP-dependent activation of (R)-beta-lysine produced by EpmB, forming a lysyl-adenylate, from which the beta-lysyl moiety is then transferred to the epsilon-amino group of a conserved specific lysine residue in EF-P. In Baumannia cicadellinicola subsp. Homalodisca coagulata, this protein is Elongation factor P--(R)-beta-lysine ligase.